The primary structure comprises 240 residues: Enolase-phosphatase E1 (240 aa).

Belongs to the HAD-like hydrolase superfamily. MasA/MtnC family. Monomer. Requires Mg(2+) as cofactor.

It carries out the reaction 5-methylsulfanyl-2,3-dioxopentyl phosphate + H2O = 1,2-dihydroxy-5-(methylsulfanyl)pent-1-en-3-one + phosphate. It participates in amino-acid biosynthesis; L-methionine biosynthesis via salvage pathway; L-methionine from S-methyl-5-thio-alpha-D-ribose 1-phosphate: step 3/6. Its pathway is amino-acid biosynthesis; L-methionine biosynthesis via salvage pathway; L-methionine from S-methyl-5-thio-alpha-D-ribose 1-phosphate: step 4/6. Its function is as follows. Bifunctional enzyme that catalyzes the enolization of 2,3-diketo-5-methylthiopentyl-1-phosphate (DK-MTP-1-P) into the intermediate 2-hydroxy-3-keto-5-methylthiopentenyl-1-phosphate (HK-MTPenyl-1-P), which is then dephosphorylated to form the acireductone 1,2-dihydroxy-3-keto-5-methylthiopentene (DHK-MTPene). In Saccharopolyspora erythraea (strain ATCC 11635 / DSM 40517 / JCM 4748 / NBRC 13426 / NCIMB 8594 / NRRL 2338), this protein is Enolase-phosphatase E1.